Here is a 177-residue protein sequence, read N- to C-terminus: MSYKLKVKGQYIKDLSFENQNSPQIFVMISKTPPEINISVNVSSVSLPVKAQDQENGQSLDNKVEPLYEVTLQVNAEARVGTTVAFICEVKYCGVFSVENSDASNGEELSQQDMRDMLLISAPSILFPFVRELISRITATGGFPPLMLDVVDFKAMYESQIKQNAAEQNDNGQHTEK.

This sequence belongs to the SecB family. In terms of assembly, homotetramer, a dimer of dimers. One homotetramer interacts with 1 SecA dimer.

The protein resides in the cytoplasm. Its function is as follows. One of the proteins required for the normal export of preproteins out of the cell cytoplasm. It is a molecular chaperone that binds to a subset of precursor proteins, maintaining them in a translocation-competent state. It also specifically binds to its receptor SecA. The sequence is that of Protein-export protein SecB from Ehrlichia canis (strain Jake).